We begin with the raw amino-acid sequence, 87 residues long: Small ribosomal subunit protein bS20 (87 aa).

It belongs to the bacterial ribosomal protein bS20 family.

In terms of biological role, binds directly to 16S ribosomal RNA. The chain is Small ribosomal subunit protein bS20 from Alkaliphilus metalliredigens (strain QYMF).